A 241-amino-acid polypeptide reads, in one-letter code: Probable transcriptional regulatory protein CV_3123 (241 aa).

Belongs to the TACO1 family.

It localises to the cytoplasm. The protein is Probable transcriptional regulatory protein CV_3123 of Chromobacterium violaceum (strain ATCC 12472 / DSM 30191 / JCM 1249 / CCUG 213 / NBRC 12614 / NCIMB 9131 / NCTC 9757 / MK).